A 133-amino-acid chain; its full sequence is Salivary cystatin-L (133 aa).

The N-terminal stretch at 1 to 19 (MTASFALVLLLGGVAVCIA) is a signal peptide. A Cystatin domain is found at 29-115 (KANHQANPEY…VAQRTCTTVV (87 aa)).

This sequence belongs to the cystatin family. In terms of tissue distribution, salivary gland.

It is found in the secreted. In terms of biological role, inhibitor of cysteine proteinases. Inhibits host cathepsin L (CTSL) and S (CTSS). Modulates production of various cytokines and chemokines in lipopolysaccharide (LPS)-stimulated mouse dendritic cell. Suppresses maturation of mouse bone-marrow-derived dendritic cells (BMDCs). The sequence is that of Salivary cystatin-L from Ixodes persulcatus (Taiga tick).